The primary structure comprises 403 residues: Cytochrome P450 monooxygenase ustC (403 aa).

The first 18 residues, 1–18 (MSPFIFAVTLTFAILALG), serve as a signal peptide directing secretion. N-linked (GlcNAc...) asparagine glycosylation is found at Asn-52 and Asn-92. Cys-318 contacts heme.

This sequence belongs to the cytochrome P450 family. Heme serves as cofactor.

It functions in the pathway mycotoxin biosynthesis. Cytochrome P450 monooxygenase; part of the gene cluster that mediates the biosynthesis of the secondary metabolite ustiloxin B, an antimitotic tetrapeptide. First, ustA is processed by the subtilisin-like endoprotease Kex2 that is outside the ustiloxin B gene cluster, at the C-terminal side of Arg-Lys, after transfer to Golgi apparatus through the endoplasmic reticulum (ER). Cleavage by KEX2 generates 16 peptides YAIG-I to YAIG-XVI. To process the precursor peptide further, at least two peptidases are necessary to cleave the N-terminal and C-terminal sides of the Tyr-Ala-Ile-Gly core peptide which serves as backbone for the synthesis of ustiloxin B, through cyclization and modification of the tyrosine with a non-protein coding amino acid, norvaline. One of the two peptidases must be the serine peptidase ustP; and the other pepdidase is probably ustH. Macrocyclization of the core peptide derived from ustA requires the tyrosinase ustQ, as well as the homologous oxidases ustYa and ustYb, and leads to the production of the first cyclization product N-desmethylustiloxin F. For the formation of N-desmethylustiloxin F, three oxidation steps are required, hydroxylation at the benzylic position, hydroxylation at either the aromatic ring of Tyr or beta-position of Ile, and oxidative cyclization. UstQ may catalyze the oxidation of a phenol moiety, whereas the ustYa and ustYb are most likely responsible for the remaining two-step oxidations. N-desmethylustiloxin F is then methylated by ustM to yield ustiloxin F which in turn substrate of the cytochrome P450 monooxygenase ustC which catalyzes the formation of S-deoxyustiloxin H. The flavoprotein monooxygenases ustF1 and ustF2 then participate in the modification of the side chain of S-deoxyustiloxin H, leading to the synthesis of an oxime intermediate, via ustiloxin H. Finally, carboxylative dehydration performed by the cysteine desulfurase-like protein ustD yields ustiloxin B. The polypeptide is Cytochrome P450 monooxygenase ustC (Aspergillus flavus (strain ATCC 200026 / FGSC A1120 / IAM 13836 / NRRL 3357 / JCM 12722 / SRRC 167)).